The following is a 358-amino-acid chain: MLYHLLYPLHEQFSVLYIFRYITFRAIYATITALMIAFILGPWLIDKLSRLQIGQSIRKDGPQSHFKKEGTPTMGGTLILLAIVLPTLLWTDLTNVYVWVTLLVTVGFGAVGFVDDYRKVKLRNSAGLSARQKMLWLMLIAGTAGVMLYSYPPFQTTLAFPFFKGLRPELGLFYIPFAVLVIVGASNAVNLTDGLDGLAIGPTIIASGTYLLFAYLAGNARLAEYLQISSVQGAGELAVLCGAMVGAGLGFLWFNTYPAQVFMGDVGSLSLGGALGTIAVITKQEIVLVIVGGIFVVEALSVIVQVSSFKLLGKRIFRMAPIHHHFELKGWAEPKIIVRFWIISIILALVALSTLKLR.

The next 10 helical transmembrane spans lie at 26–46 (AIYA…WLID), 70–90 (GTPT…TLLW), 94–114 (TNVY…VGFV), 134–154 (MLWL…YPPF), 169–189 (ELGL…SNAV), 197–217 (GLAI…AYLA), 234–254 (AGEL…FLWF), 261–281 (VFMG…IAVI), 286–306 (IVLV…IVQV), and 335–355 (KIIV…LSTL).

This sequence belongs to the glycosyltransferase 4 family. MraY subfamily. Mg(2+) is required as a cofactor.

Its subcellular location is the cell inner membrane. The catalysed reaction is UDP-N-acetyl-alpha-D-muramoyl-L-alanyl-gamma-D-glutamyl-meso-2,6-diaminopimeloyl-D-alanyl-D-alanine + di-trans,octa-cis-undecaprenyl phosphate = di-trans,octa-cis-undecaprenyl diphospho-N-acetyl-alpha-D-muramoyl-L-alanyl-D-glutamyl-meso-2,6-diaminopimeloyl-D-alanyl-D-alanine + UMP. The protein operates within cell wall biogenesis; peptidoglycan biosynthesis. Catalyzes the initial step of the lipid cycle reactions in the biosynthesis of the cell wall peptidoglycan: transfers peptidoglycan precursor phospho-MurNAc-pentapeptide from UDP-MurNAc-pentapeptide onto the lipid carrier undecaprenyl phosphate, yielding undecaprenyl-pyrophosphoryl-MurNAc-pentapeptide, known as lipid I. The polypeptide is Phospho-N-acetylmuramoyl-pentapeptide-transferase (Syntrophotalea carbinolica (strain DSM 2380 / NBRC 103641 / GraBd1) (Pelobacter carbinolicus)).